The sequence spans 174 residues: MAEENQNPTPEEAAIVEAGAVSQLLTENGFSHESLERDHSGIEIIKVDADLLIPLCTALYAFGFNYLQCQGAYDLGPGKELVSFYHLLKVGDNVTDPEEVRVKVFLPRENPVVPSVYWIWKGADWQERESYDMYGIVYEGHPNLKRILMPEDWIGWPLRKDYVSPDFYELQDAY.

Belongs to the complex I 30 kDa subunit family. NDH-1 can be composed of about 15 different subunits; different subcomplexes with different compositions have been identified which probably have different functions.

It localises to the cellular thylakoid membrane. The enzyme catalyses a plastoquinone + NADH + (n+1) H(+)(in) = a plastoquinol + NAD(+) + n H(+)(out). It catalyses the reaction a plastoquinone + NADPH + (n+1) H(+)(in) = a plastoquinol + NADP(+) + n H(+)(out). NDH-1 shuttles electrons from an unknown electron donor, via FMN and iron-sulfur (Fe-S) centers, to quinones in the respiratory and/or the photosynthetic chain. The immediate electron acceptor for the enzyme in this species is believed to be plastoquinone. Couples the redox reaction to proton translocation, and thus conserves the redox energy in a proton gradient. Cyanobacterial NDH-1 also plays a role in inorganic carbon-concentration. The polypeptide is NAD(P)H-quinone oxidoreductase subunit J (Picosynechococcus sp. (strain ATCC 27264 / PCC 7002 / PR-6) (Agmenellum quadruplicatum)).